The primary structure comprises 83 residues: UPF0147 protein TK2131 (83 aa).

Belongs to the UPF0147 family.

The chain is UPF0147 protein TK2131 from Thermococcus kodakarensis (strain ATCC BAA-918 / JCM 12380 / KOD1) (Pyrococcus kodakaraensis (strain KOD1)).